An 88-amino-acid polypeptide reads, in one-letter code: Large ribosomal subunit protein bL27 (88 aa).

Positions 1 to 24 (MAHKKGTGSTRNGRDSNSKRLGVK) are disordered.

It belongs to the bacterial ribosomal protein bL27 family.

The sequence is that of Large ribosomal subunit protein bL27 from Prochlorococcus marinus (strain MIT 9303).